A 341-amino-acid polypeptide reads, in one-letter code: HMG box-containing protein C10F6.08c (341 aa).

Residues 68-77 are compositionally biased toward basic and acidic residues; sequence SEAKSREFGQ. 2 disordered regions span residues 68–195 and 236–341; these read SEAK…SNAK and LTEE…SSNA. Composition is skewed to polar residues over residues 116–157 and 165–177; these read DTNV…QVVQ and NTDPIPSPIITNL. The span at 178–195 shows a compositional bias: low complexity; it reads KTESSKSSGAKKATSNAK. The HMG box DNA-binding region spans 195 to 263; the sequence is KITDTMLFNH…KAREARRRRS (69 aa). Composition is skewed to basic and acidic residues over residues 238-256 and 269-304; these read EEEKKPYHEGLLAAREKAR and KLEKEKAKEKQKDKDQEQDTVSDKNQIDEIEKGQKE. Phosphothreonine is present on residues Thr314 and Thr315. Phosphoserine is present on Ser316.

It is found in the nucleus. The protein is HMG box-containing protein C10F6.08c of Schizosaccharomyces pombe (strain 972 / ATCC 24843) (Fission yeast).